Reading from the N-terminus, the 235-residue chain is Large ribosomal subunit protein uL1 (235 aa).

The protein belongs to the universal ribosomal protein uL1 family. In terms of assembly, part of the 50S ribosomal subunit.

Functionally, binds directly to 23S rRNA. The L1 stalk is quite mobile in the ribosome, and is involved in E site tRNA release. In terms of biological role, protein L1 is also a translational repressor protein, it controls the translation of the L11 operon by binding to its mRNA. This Methylobacterium sp. (strain 4-46) protein is Large ribosomal subunit protein uL1.